Here is a 306-residue protein sequence, read N- to C-terminus: D-alanine--D-alanine ligase (306 aa).

The ATP-grasp domain maps to 101–300 (KVVMAAAGIP…FGELVTWMVE (200 aa)). An ATP-binding site is contributed by 128–182 (LPPPYVLKPNTGGSSVGVFIVKEDQPHPPQELFRADWTFGESLMAEPFIKGLELT). The Mg(2+) site is built by aspartate 250, glutamate 267, and asparagine 269.

It belongs to the D-alanine--D-alanine ligase family. Requires Mg(2+) as cofactor. Mn(2+) is required as a cofactor.

It localises to the cytoplasm. The catalysed reaction is 2 D-alanine + ATP = D-alanyl-D-alanine + ADP + phosphate + H(+). It participates in cell wall biogenesis; peptidoglycan biosynthesis. Its function is as follows. Cell wall formation. The sequence is that of D-alanine--D-alanine ligase from Azorhizobium caulinodans (strain ATCC 43989 / DSM 5975 / JCM 20966 / LMG 6465 / NBRC 14845 / NCIMB 13405 / ORS 571).